Reading from the N-terminus, the 400-residue chain is Lysophospholipid transporter LplT (400 aa).

12 consecutive transmembrane segments (helical) span residues 19 to 39, 53 to 73, 91 to 111, 139 to 159, 164 to 184, 195 to 213, 227 to 247, 257 to 277, 281 to 301, 304 to 324, 352 to 372, and 373 to 393; these read VIVA…ATLA, VLQM…GQIA, AGAA…LVGI, LMEA…GVLA, IAAL…NLFI, SWRL…VVLW, LFWG…PVAL, YLNA…AKLV, TVSR…IFSL, ALLP…FFVV, NSAM…GVPA, and VAIG…LWIW.

The protein belongs to the major facilitator superfamily. LplT (TC 2.A.1.42) family.

The protein resides in the cell inner membrane. Its function is as follows. Catalyzes the facilitated diffusion of 2-acyl-glycero-3-phosphoethanolamine (2-acyl-GPE) into the cell. The sequence is that of Lysophospholipid transporter LplT from Salmonella schwarzengrund (strain CVM19633).